Here is a 494-residue protein sequence, read N- to C-terminus: Glutamyl-tRNA(Gln) amidotransferase subunit A (494 aa).

Residues Lys-80 and Ser-155 each act as charge relay system in the active site. The active-site Acyl-ester intermediate is Ser-179.

This sequence belongs to the amidase family. GatA subfamily. As to quaternary structure, heterotrimer of A, B and C subunits.

The enzyme catalyses L-glutamyl-tRNA(Gln) + L-glutamine + ATP + H2O = L-glutaminyl-tRNA(Gln) + L-glutamate + ADP + phosphate + H(+). Allows the formation of correctly charged Gln-tRNA(Gln) through the transamidation of misacylated Glu-tRNA(Gln) in organisms which lack glutaminyl-tRNA synthetase. The reaction takes place in the presence of glutamine and ATP through an activated gamma-phospho-Glu-tRNA(Gln). The polypeptide is Glutamyl-tRNA(Gln) amidotransferase subunit A (Lachnoclostridium phytofermentans (strain ATCC 700394 / DSM 18823 / ISDg) (Clostridium phytofermentans)).